An 89-amino-acid chain; its full sequence is Small ribosomal subunit protein uS15 (89 aa).

The protein belongs to the universal ribosomal protein uS15 family. As to quaternary structure, part of the 30S ribosomal subunit. Forms a bridge to the 50S subunit in the 70S ribosome, contacting the 23S rRNA.

In terms of biological role, one of the primary rRNA binding proteins, it binds directly to 16S rRNA where it helps nucleate assembly of the platform of the 30S subunit by binding and bridging several RNA helices of the 16S rRNA. Its function is as follows. Forms an intersubunit bridge (bridge B4) with the 23S rRNA of the 50S subunit in the ribosome. The protein is Small ribosomal subunit protein uS15 of Anoxybacillus flavithermus (strain DSM 21510 / WK1).